A 252-amino-acid chain; its full sequence is 4-hydroxy-tetrahydrodipicolinate reductase (252 aa).

An NAD(+)-binding site is contributed by 8–13 (GALGRM). NADP(+) is bound at residue R36. Residues 89–91 (GTT) and 114–117 (SSNF) contribute to the NAD(+) site. The Proton donor/acceptor role is filled by H146. Residue H147 participates in (S)-2,3,4,5-tetrahydrodipicolinate binding. K150 functions as the Proton donor in the catalytic mechanism. Residue 156–157 (GT) coordinates (S)-2,3,4,5-tetrahydrodipicolinate.

This sequence belongs to the DapB family.

It localises to the cytoplasm. It catalyses the reaction (S)-2,3,4,5-tetrahydrodipicolinate + NAD(+) + H2O = (2S,4S)-4-hydroxy-2,3,4,5-tetrahydrodipicolinate + NADH + H(+). The enzyme catalyses (S)-2,3,4,5-tetrahydrodipicolinate + NADP(+) + H2O = (2S,4S)-4-hydroxy-2,3,4,5-tetrahydrodipicolinate + NADPH + H(+). It functions in the pathway amino-acid biosynthesis; L-lysine biosynthesis via DAP pathway; (S)-tetrahydrodipicolinate from L-aspartate: step 4/4. Catalyzes the conversion of 4-hydroxy-tetrahydrodipicolinate (HTPA) to tetrahydrodipicolinate. The chain is 4-hydroxy-tetrahydrodipicolinate reductase from Methanoculleus marisnigri (strain ATCC 35101 / DSM 1498 / JR1).